Reading from the N-terminus, the 514-residue chain is ATP synthase subunit alpha (514 aa).

An ATP-binding site is contributed by 170-177; sequence GDRQIGKT.

Belongs to the ATPase alpha/beta chains family. As to quaternary structure, F-type ATPases have 2 components, CF(1) - the catalytic core - and CF(0) - the membrane proton channel. CF(1) has five subunits: alpha(3), beta(3), gamma(1), delta(1), epsilon(1). CF(0) has three main subunits: a(1), b(2) and c(9-12). The alpha and beta chains form an alternating ring which encloses part of the gamma chain. CF(1) is attached to CF(0) by a central stalk formed by the gamma and epsilon chains, while a peripheral stalk is formed by the delta and b chains.

The protein localises to the cell inner membrane. The enzyme catalyses ATP + H2O + 4 H(+)(in) = ADP + phosphate + 5 H(+)(out). Functionally, produces ATP from ADP in the presence of a proton gradient across the membrane. The alpha chain is a regulatory subunit. This Pseudomonas fluorescens (strain SBW25) protein is ATP synthase subunit alpha.